Reading from the N-terminus, the 194-residue chain is Recombination protein RecR (194 aa).

A C4-type zinc finger spans residues 52–67 (CTECRTFTEEEVCHIC). A Toprim domain is found at 76-171 (GQICVVESPA…EASRIAHGVP (96 aa)).

The protein belongs to the RecR family.

Its function is as follows. May play a role in DNA repair. It seems to be involved in an RecBC-independent recombinational process of DNA repair. It may act with RecF and RecO. The protein is Recombination protein RecR of Vibrio campbellii (strain ATCC BAA-1116).